The primary structure comprises 57 residues: DNA-directed RNA polymerase subunit Rpo6 (57 aa).

The protein belongs to the archaeal Rpo6/eukaryotic RPB6 RNA polymerase subunit family. As to quaternary structure, part of the RNA polymerase complex.

It is found in the cytoplasm. The catalysed reaction is RNA(n) + a ribonucleoside 5'-triphosphate = RNA(n+1) + diphosphate. In terms of biological role, DNA-dependent RNA polymerase (RNAP) catalyzes the transcription of DNA into RNA using the four ribonucleoside triphosphates as substrates. This is DNA-directed RNA polymerase subunit Rpo6 from Methanocaldococcus jannaschii (strain ATCC 43067 / DSM 2661 / JAL-1 / JCM 10045 / NBRC 100440) (Methanococcus jannaschii).